Here is a 309-residue protein sequence, read N- to C-terminus: Ribosomal RNA large subunit methyltransferase F (309 aa).

The protein belongs to the methyltransferase superfamily. METTL16/RlmF family.

Its subcellular location is the cytoplasm. The enzyme catalyses adenosine(1618) in 23S rRNA + S-adenosyl-L-methionine = N(6)-methyladenosine(1618) in 23S rRNA + S-adenosyl-L-homocysteine + H(+). Functionally, specifically methylates the adenine in position 1618 of 23S rRNA. In Cronobacter sakazakii (strain ATCC BAA-894) (Enterobacter sakazakii), this protein is Ribosomal RNA large subunit methyltransferase F.